The following is a 430-amino-acid chain: Dihydrolipoyllysine-residue acetyltransferase component of pyruvate dehydrogenase complex (430 aa).

The Lipoyl-binding domain occupies alanine 2 to aspartate 77. Lysine 43 bears the N6-lipoyllysine mark. The tract at residues aspartate 80–arginine 122 is disordered. Basic and acidic residues predominate over residues methionine 84–alanine 104. Positions lysine 125–leucine 162 constitute a Peripheral subunit-binding (PSBD) domain. The tract at residues glycine 165–glutamate 200 is disordered. Residues alanine 166 to threonine 193 are compositionally biased toward low complexity. Residue histidine 401 is part of the active site.

This sequence belongs to the 2-oxoacid dehydrogenase family. Forms a 24-polypeptide structural core with octahedral symmetry. The cofactor is (R)-lipoate.

The enzyme catalyses N(6)-[(R)-dihydrolipoyl]-L-lysyl-[protein] + acetyl-CoA = N(6)-[(R)-S(8)-acetyldihydrolipoyl]-L-lysyl-[protein] + CoA. In terms of biological role, the pyruvate dehydrogenase complex catalyzes the overall conversion of pyruvate to acetyl-CoA and CO(2). It contains multiple copies of three enzymatic components: pyruvate dehydrogenase (E1), dihydrolipoamide acetyltransferase (E2) and lipoamide dehydrogenase (E3). The protein is Dihydrolipoyllysine-residue acetyltransferase component of pyruvate dehydrogenase complex (pdhC) of Staphylococcus aureus (strain COL).